Consider the following 532-residue polypeptide: MVKRVAIVGAGVSGLASIKCCLEEGLEPTCFERSSDLGGLWRFTEHVEEGRASLYKSVVSNSSREMSCYPDFPFPEDYPNFVPNSLFLEYLKLYSTQFNLQRCIYFNTKVCSITKRPDFAVSGQWEVVTVTNGKQNSAIFDAVMVCTGFLTNPHLPLDSFPGILTFKGEYFHSRQYKHPDIFKDKRVLVVGMGNSGTDIAVEASHLAKKVFLSTTGGAWVISRVFDSGYPWDMIFMTRFQNMLRNLLPTPIVSWLISKKMNSWFNHVNYGVAPEDRTQLREPVLNDELPGRIITGKVFIKPSIKEVKENSVVFNNTPKEEPIDIIVFATGYTFAFPFLDESVVKVEDGQASLYKYIFPAHLPKPTLAVIGLIKPLGSMVPTGETQARWVVQVLKGATTLPPPSVMMEEVNERKKNKHSGFGLCYCKALQTDYITYIDDLLTSINAKPDLRAMLLTDPRLALSIFFGPCTPYHFRLTGPGKWEGARKAILTQWDRTVKVTKTRTIQESPSSFETLLKLFSFLALLIAVFLIFL.

Residues 1 to 510 (MVKRVAIVGA…TRTIQESPSS (510 aa)) are Lumenal-facing. FAD-binding positions include 9 to 13 (GAGVS), Glu32, 40 to 41 (LW), and 61 to 62 (NS). NADP(+) contacts are provided by residues 60-61 (SN) and 195-198 (SGTD). A helical transmembrane segment spans residues 511-531 (FETLLKLFSFLALLIAVFLIF). Leu532 is a topological domain (cytoplasmic).

This sequence belongs to the FMO family. Requires FAD as cofactor. Liver.

It localises to the endoplasmic reticulum membrane. It catalyses the reaction hypotaurine + NADPH + O2 + H(+) = taurine + NADP(+) + H2O. It carries out the reaction hypotaurine + NADH + O2 + H(+) = taurine + NAD(+) + H2O. The catalysed reaction is trimethylamine + NADPH + O2 = trimethylamine N-oxide + NADP(+) + H2O. The enzyme catalyses N,N-dimethylaniline + NADPH + O2 + H(+) = N,N-dimethylaniline N-oxide + NADP(+) + H2O. In terms of biological role, broad spectrum monooxygenase that catalyzes the oxygenation of a wide variety of nitrogen- and sulfur-containing compounds including xenobiotics. Catalyzes the S-oxygenation of hypotaurine to produce taurine, an organic osmolyte involved in cell volume regulation as well as a variety of cytoprotective and developmental processes. In vitro, catalyzes the N-oxygenation of trimethylamine (TMA) to produce trimethylamine N-oxide (TMAO) and could therefore participate to the detoxification of this compound that is generated by the action of gut microbiota from dietary precursors such as choline, choline containing compounds, betaine or L-carnitine. The chain is Flavin-containing monooxygenase 1 from Mus musculus (Mouse).